Consider the following 197-residue polypeptide: Probable GTP-binding protein EngB (197 aa).

The EngB-type G domain occupies 22–195 (ELPEVALAGR…WKAIYALITE (174 aa)). GTP is bound by residues 30 to 37 (GRSNVGKS), 57 to 61 (GKTQT), 75 to 78 (DVPG), 142 to 145 (TKLD), and 174 to 176 (FSA). 2 residues coordinate Mg(2+): S37 and T59.

This sequence belongs to the TRAFAC class TrmE-Era-EngA-EngB-Septin-like GTPase superfamily. EngB GTPase family. Mg(2+) is required as a cofactor.

In terms of biological role, necessary for normal cell division and for the maintenance of normal septation. The sequence is that of Probable GTP-binding protein EngB from Exiguobacterium sp. (strain ATCC BAA-1283 / AT1b).